Reading from the N-terminus, the 386-residue chain is Ovalbumin (386 aa).

Position 2 is an N-acetylglycine (glycine 2). The segment at residues 22–48 (HHANENIFYCPIAIMSALAMVYLGAKD) is a signal peptide (not cleaved). A Phosphoserine modification is found at serine 69. Cysteine 74 and cysteine 121 are oxidised to a cystine. Glutamate 192 contributes to the Ca(2+) binding site. Asparagine 293 carries N-linked (GlcNAc...) asparagine glycosylation. A Phosphoserine modification is found at serine 345.

It belongs to the serpin family. Ov-serpin subfamily. As to quaternary structure, homodimer. In terms of processing, undergoes proteolytic cleavage first at the canonical P1-P1' site, and then at the P8-P7 site by subtilisin. Major protein of egg white. Expressed in the magnum of the oviduct (at protein level).

Its subcellular location is the secreted. Non-inhibitory serpin. Storage protein of egg white. This chain is Ovalbumin (SERPINB14), found in Gallus gallus (Chicken).